A 151-amino-acid chain; its full sequence is UPF0178 protein GSU0171 (151 aa).

The protein belongs to the UPF0178 family.

The polypeptide is UPF0178 protein GSU0171 (Geobacter sulfurreducens (strain ATCC 51573 / DSM 12127 / PCA)).